Consider the following 122-residue polypeptide: Small ribosomal subunit protein uS13 (122 aa).

Residues 95-122 form a disordered region; the sequence is GLPVRGQRTHTNARTRKGPRRGTVGKKK.

It belongs to the universal ribosomal protein uS13 family. Part of the 30S ribosomal subunit. Forms a loose heterodimer with protein S19. Forms two bridges to the 50S subunit in the 70S ribosome.

Functionally, located at the top of the head of the 30S subunit, it contacts several helices of the 16S rRNA. In the 70S ribosome it contacts the 23S rRNA (bridge B1a) and protein L5 of the 50S subunit (bridge B1b), connecting the 2 subunits; these bridges are implicated in subunit movement. Contacts the tRNAs in the A and P-sites. The polypeptide is Small ribosomal subunit protein uS13 (Nitratidesulfovibrio vulgaris (strain ATCC 29579 / DSM 644 / CCUG 34227 / NCIMB 8303 / VKM B-1760 / Hildenborough) (Desulfovibrio vulgaris)).